We begin with the raw amino-acid sequence, 159 residues long: Transcriptional repressor NrdR (159 aa).

A zinc finger lies at 3 to 34 (CPFCRHEDTQVVDSRVSEDGAAIRRRRRCSAC). The ATP-cone domain maps to 49–139 (PAVVKKDGSR…VYRRFEDVSE (91 aa)).

It belongs to the NrdR family. Zn(2+) serves as cofactor.

Functionally, negatively regulates transcription of bacterial ribonucleotide reductase nrd genes and operons by binding to NrdR-boxes. The protein is Transcriptional repressor NrdR of Burkholderia multivorans (strain ATCC 17616 / 249).